The primary structure comprises 238 residues: Demethylmenaquinone methyltransferase (238 aa).

Residues Thr-65, Asp-85, and 109 to 110 (DA) each bind S-adenosyl-L-methionine.

Belongs to the class I-like SAM-binding methyltransferase superfamily. MenG/UbiE family.

The catalysed reaction is a 2-demethylmenaquinol + S-adenosyl-L-methionine = a menaquinol + S-adenosyl-L-homocysteine + H(+). The protein operates within quinol/quinone metabolism; menaquinone biosynthesis; menaquinol from 1,4-dihydroxy-2-naphthoate: step 2/2. Methyltransferase required for the conversion of demethylmenaquinol (DMKH2) to menaquinol (MKH2). The polypeptide is Demethylmenaquinone methyltransferase (Roseiflexus sp. (strain RS-1)).